The chain runs to 107 residues: Small ribosomal subunit protein uS15 (107 aa).

Position 27 is an N6-acetyllysine; alternate (Lys-27). The residue at position 27 (Lys-27) is an N6-succinyllysine; alternate. Lys-27 is covalently cross-linked (Glycyl lysine isopeptide (Lys-Gly) (interchain with G-Cter in ubiquitin)). Residue Ser-30 is modified to Phosphoserine. The residue at position 34 (Lys-34) is an N6-succinyllysine. Tyr-38 is modified (phosphotyrosine). Lys-43 participates in a covalent cross-link: Glycyl lysine isopeptide (Lys-Gly) (interchain with G-Cter in SUMO2).

Belongs to the universal ribosomal protein uS15 family. In terms of assembly, component of the small ribosomal subunit. Part of the small subunit (SSU) processome, composed of more than 70 proteins and the RNA chaperone small nucleolar RNA (snoRNA) U3. In terms of processing, ubiquitinated at Lys-27 by RNF14 and RNF25 in response to ribosome collisions (ribosome stalling).

The protein resides in the cytoplasm. The protein localises to the nucleus. It localises to the nucleolus. Its function is as follows. Component of the small ribosomal subunit. The ribosome is a large ribonucleoprotein complex responsible for the synthesis of proteins in the cell. Part of the small subunit (SSU) processome, first precursor of the small eukaryotic ribosomal subunit. During the assembly of the SSU processome in the nucleolus, many ribosome biogenesis factors, an RNA chaperone and ribosomal proteins associate with the nascent pre-rRNA and work in concert to generate RNA folding, modifications, rearrangements and cleavage as well as targeted degradation of pre-ribosomal RNA by the RNA exosome. The protein is Small ribosomal subunit protein uS15 (RPS13) of Sus scrofa (Pig).